Reading from the N-terminus, the 968-residue chain is Phosphoenolpyruvate carboxylase 3 (968 aa).

Position 11 is a phosphoserine (S11). Residues H173 and K603 contribute to the active site. A Phosphoserine modification is found at S705.

The protein belongs to the PEPCase type 1 family. As to quaternary structure, homotetramer. Requires Mg(2+) as cofactor. Expressed in roots and siliques, and to a lower extent in stems, leaves and flowers.

The protein resides in the cytoplasm. The enzyme catalyses oxaloacetate + phosphate = phosphoenolpyruvate + hydrogencarbonate. With respect to regulation, by light-reversible phosphorylation. Functionally, through the carboxylation of phosphoenolpyruvate (PEP) it forms oxaloacetate, a four-carbon dicarboxylic acid source for the tricarboxylic acid cycle. The protein is Phosphoenolpyruvate carboxylase 3 (PPC3) of Arabidopsis thaliana (Mouse-ear cress).